The following is a 222-amino-acid chain: 3-demethoxyubiquinol 3-hydroxylase (222 aa).

Positions 71, 101, 104, 153, 185, and 188 each coordinate Fe cation.

The protein belongs to the COQ7 family. Fe cation is required as a cofactor.

The protein localises to the cell membrane. It carries out the reaction a 5-methoxy-2-methyl-3-(all-trans-polyprenyl)benzene-1,4-diol + AH2 + O2 = a 3-demethylubiquinol + A + H2O. It functions in the pathway cofactor biosynthesis; ubiquinone biosynthesis. In terms of biological role, catalyzes the hydroxylation of 2-nonaprenyl-3-methyl-6-methoxy-1,4-benzoquinol during ubiquinone biosynthesis. This chain is 3-demethoxyubiquinol 3-hydroxylase, found in Bordetella pertussis (strain Tohama I / ATCC BAA-589 / NCTC 13251).